A 57-amino-acid chain; its full sequence is MTEIKANSTVMIHVLADETLSSIKREYVEVDRKTEIGEKIIIVDKNDPDDEYENGAI.

This is an uncharacterized protein from Bacillus subtilis (strain 168).